Here is a 213-residue protein sequence, read N- to C-terminus: Kynurenine formamidase (213 aa).

W18 serves as a coordination point for substrate. The Zn(2+) site is built by H48, H52, and D54. Residue H58 is the Proton donor/acceptor of the active site. Zn(2+) contacts are provided by H160 and E172.

The protein belongs to the Cyclase 1 superfamily. KynB family. As to quaternary structure, homodimer. The cofactor is Zn(2+).

The enzyme catalyses N-formyl-L-kynurenine + H2O = L-kynurenine + formate + H(+). It functions in the pathway amino-acid degradation; L-tryptophan degradation via kynurenine pathway; L-kynurenine from L-tryptophan: step 2/2. Its function is as follows. Catalyzes the hydrolysis of N-formyl-L-kynurenine to L-kynurenine, the second step in the kynurenine pathway of tryptophan degradation. The polypeptide is Kynurenine formamidase (Burkholderia orbicola (strain MC0-3)).